An 861-amino-acid polypeptide reads, in one-letter code: ATP-dependent helicase rhp16 (861 aa).

Positions 1-13 are enriched in polar residues; the sequence is MGTSCNKINSNSN. The segment at 1–217 is disordered; sequence MGTSCNKINS…KSIPSHERTH (217 aa). Basic and acidic residues-rich tracts occupy residues 14 to 23 and 38 to 57; these read KGKENMHFVL and VERD…KEFE. Residues 60 to 82 are compositionally biased toward polar residues; sequence LSTNKKLIIQSNNTSSQHSTPPL. Residues 83 to 95 are compositionally biased toward low complexity; the sequence is SISDTSTHTGSST. Over residues 96–106 the composition is skewed to polar residues; it reads DNVEANPNTGF. Over residues 109–123 the composition is skewed to basic residues; that stretch reads ARKRSLRSSNLKKKF. Positions 131 to 145 are enriched in acidic residues; the sequence is ESNESEFIDDDESDE. Residues 193–204 show a composition bias toward low complexity; it reads ARASSSASSSSR. One can recognise a Helicase ATP-binding domain in the interval 268 to 442; the sequence is RQEDSSFGGG…FSLLRFLRAD (175 aa). 281 to 288 provides a ligand contact to ATP; it reads DEMGMGKT. A DEAH box motif is present at residues 393-396; that stretch reads DEAH. The RING-type zinc-finger motif lies at 609–652; the sequence is CKICDEVAQDAIESRCHHTFCRLCVTEYINAAGDGENVNCPSCF. One can recognise a Helicase C-terminal domain in the interval 695-848; the sequence is LVEELYLLRK…TIDQDEKALN (154 aa).

The protein belongs to the SNF2/RAD54 helicase family.

It localises to the nucleus. Its function is as follows. Involved in global genome repair (GGR) via nucleotide excision repair (NER), in conjunction with rhp7, after UV irradiation. In Schizosaccharomyces pombe (strain 972 / ATCC 24843) (Fission yeast), this protein is ATP-dependent helicase rhp16 (rhp16).